Here is a 110-residue protein sequence, read N- to C-terminus: Iron-sulfur cluster assembly protein CyaY (110 aa).

The protein belongs to the frataxin family.

Involved in iron-sulfur (Fe-S) cluster assembly. May act as a regulator of Fe-S biogenesis. The sequence is that of Iron-sulfur cluster assembly protein CyaY from Pseudomonas syringae pv. tomato (strain ATCC BAA-871 / DC3000).